Here is a 514-residue protein sequence, read N- to C-terminus: Cytochrome P450 87A3 (514 aa).

A run of 2 helical transmembrane segments spans residues 36–56 (ASSM…VALL) and 315–335 (LMFV…TIGV). Heme is bound at residue C463.

This sequence belongs to the cytochrome P450 family. Heme is required as a cofactor. In terms of tissue distribution, expressed in roots and coleoptiles, but not in leaves.

The protein resides in the cytoplasmic vesicle membrane. This is Cytochrome P450 87A3 (CYP87A3) from Oryza sativa subsp. japonica (Rice).